A 102-amino-acid chain; its full sequence is RNA-binding protein Hfq (102 aa).

The Sm domain maps to 9-68 (DPFLNALRRERVPVSIYLVNGIKLQGQIESFDQFVILLKNTVSQMVYKHAISTVVPSRPV). Residues 63-102 (VPSRPVSHHSNNAGGGTSSNYHHGSSPQNTSAQQDSEETE) form a disordered region. Over residues 70–96 (HHSNNAGGGTSSNYHHGSSPQNTSAQQ) the composition is skewed to polar residues.

Belongs to the Hfq family. Homohexamer.

Functionally, RNA chaperone that binds small regulatory RNA (sRNAs) and mRNAs to facilitate mRNA translational regulation in response to envelope stress, environmental stress and changes in metabolite concentrations. Also binds with high specificity to tRNAs. The sequence is that of RNA-binding protein Hfq from Shigella dysenteriae serotype 1 (strain Sd197).